The chain runs to 123 residues: Large ribosomal subunit protein uL14 (123 aa).

Belongs to the universal ribosomal protein uL14 family. Part of the 50S ribosomal subunit. Forms a cluster with proteins L3 and L19. In the 70S ribosome, L14 and L19 interact and together make contacts with the 16S rRNA in bridges B5 and B8.

Binds to 23S rRNA. Forms part of two intersubunit bridges in the 70S ribosome. The protein is Large ribosomal subunit protein uL14 of Corynebacterium jeikeium (strain K411).